A 338-amino-acid polypeptide reads, in one-letter code: Ketol-acid reductoisomerase (NADP(+)) (338 aa).

One can recognise a KARI N-terminal Rossmann domain in the interval 1–181; sequence MKVFYDKDCD…GGGRAGIIET (181 aa). NADP(+) contacts are provided by residues 24–27, arginine 47, and serine 52; that span reads YGSQ. Residue histidine 107 is part of the active site. An NADP(+)-binding site is contributed by glycine 133. The 146-residue stretch at 182–327 folds into the KARI C-terminal knotted domain; it reads NFREETETDL…GKLRAMMPWI (146 aa). Mg(2+) contacts are provided by aspartate 190, glutamate 194, glutamate 226, and glutamate 230. Serine 251 is a binding site for substrate.

Belongs to the ketol-acid reductoisomerase family. The cofactor is Mg(2+).

It carries out the reaction (2R)-2,3-dihydroxy-3-methylbutanoate + NADP(+) = (2S)-2-acetolactate + NADPH + H(+). The enzyme catalyses (2R,3R)-2,3-dihydroxy-3-methylpentanoate + NADP(+) = (S)-2-ethyl-2-hydroxy-3-oxobutanoate + NADPH + H(+). It functions in the pathway amino-acid biosynthesis; L-isoleucine biosynthesis; L-isoleucine from 2-oxobutanoate: step 2/4. Its pathway is amino-acid biosynthesis; L-valine biosynthesis; L-valine from pyruvate: step 2/4. In terms of biological role, involved in the biosynthesis of branched-chain amino acids (BCAA). Catalyzes an alkyl-migration followed by a ketol-acid reduction of (S)-2-acetolactate (S2AL) to yield (R)-2,3-dihydroxy-isovalerate. In the isomerase reaction, S2AL is rearranged via a Mg-dependent methyl migration to produce 3-hydroxy-3-methyl-2-ketobutyrate (HMKB). In the reductase reaction, this 2-ketoacid undergoes a metal-dependent reduction by NADPH to yield (R)-2,3-dihydroxy-isovalerate. This is Ketol-acid reductoisomerase (NADP(+)) from Bordetella pertussis (strain Tohama I / ATCC BAA-589 / NCTC 13251).